Here is a 188-residue protein sequence, read N- to C-terminus: NADH-quinone oxidoreductase subunit B (188 aa).

C67, C68, C132, and C162 together coordinate [4Fe-4S] cluster.

It belongs to the complex I 20 kDa subunit family. NDH-1 is composed of 14 different subunits. Subunits NuoB, C, D, E, F, and G constitute the peripheral sector of the complex. [4Fe-4S] cluster is required as a cofactor.

It localises to the cell inner membrane. It carries out the reaction a quinone + NADH + 5 H(+)(in) = a quinol + NAD(+) + 4 H(+)(out). Functionally, NDH-1 shuttles electrons from NADH, via FMN and iron-sulfur (Fe-S) centers, to quinones in the respiratory chain. Couples the redox reaction to proton translocation (for every two electrons transferred, four hydrogen ions are translocated across the cytoplasmic membrane), and thus conserves the redox energy in a proton gradient. This is NADH-quinone oxidoreductase subunit B from Maricaulis maris (strain MCS10) (Caulobacter maris).